The following is a 108-amino-acid chain: Iron-sulfur cluster assembly protein CyaY (108 aa).

The protein belongs to the frataxin family.

In terms of biological role, involved in iron-sulfur (Fe-S) cluster assembly. May act as a regulator of Fe-S biogenesis. The chain is Iron-sulfur cluster assembly protein CyaY from Burkholderia ambifaria (strain MC40-6).